The primary structure comprises 145 residues: Large ribosomal subunit protein uL16 (145 aa).

The protein belongs to the universal ribosomal protein uL16 family. In terms of assembly, part of the 50S ribosomal subunit.

Functionally, binds 23S rRNA and is also seen to make contacts with the A and possibly P site tRNAs. This is Large ribosomal subunit protein uL16 from Exiguobacterium sp. (strain ATCC BAA-1283 / AT1b).